The following is a 436-amino-acid chain: Probable G-protein coupled receptor C06G4.5 (436 aa).

At 1–53 (MSTNLVDYVDDSYLNQSMNSENGLDSVTQIMYDMKKYNIVNDVLPPPNHEDLH) the chain is on the extracellular side. N-linked (GlcNAc...) asparagine glycosylation occurs at N15. Residues 54-74 (VVIMAVSYLLLFLLGTCGNVA) traverse the membrane as a helical segment. At 75 to 94 (VLTTIYHVIRSSRATLDNTL) the chain is on the cytoplasmic side. A helical membrane pass occupies residues 95–115 (IYVIVLSCVDFGVCLSLPITV). At 116 to 132 (IDQILGFWMFGKIPCKL) the chain is on the extracellular side. Residues 133–153 (HAVFENFGKILSALILTAMSF) form a helical membrane-spanning segment. Residues 154–171 (DRYAGVCHPQRKRLRSRN) lie on the Cytoplasmic side of the membrane. The chain crosses the membrane as a helical span at residues 172–192 (FAITILLVLAVYAFITLCPLL). The Extracellular portion of the chain corresponds to 193–230 (WSFTAREIILYAKETAPGMLTRMKIEKCTVDIDSQMFT). Residues 231–251 (AFTIYQFILCYCTPLVLIAFF) form a helical membrane-spanning segment. Over 252-281 (YTKLLSKLREHTRTFKSSQIPFLHISLYTL) the chain is Cytoplasmic. Residues 282–302 (AVACFYFLCWTPFWMATLFAV) form a helical membrane-spanning segment. Over 303-316 (YLENSANSSSVPPV) the chain is Extracellular. N309 carries N-linked (GlcNAc...) asparagine glycosylation. A helical transmembrane segment spans residues 317–337 (FVYIMYFIHALPFTNSAINWI). At 338–436 (LYGALNGQLQ…LLSNHNPTFL (99 aa)) the chain is on the cytoplasmic side.

The protein belongs to the G-protein coupled receptor 1 family.

The protein localises to the cell membrane. Putative receptor. The chain is Probable G-protein coupled receptor C06G4.5 from Caenorhabditis elegans.